The primary structure comprises 621 residues: DnaJ homolog subfamily C member 2 (621 aa).

Residue M1 is modified to N-acetylmethionine. Phosphoserine is present on residues S47, S49, S60, and S63. The 74-residue stretch at 88 to 161 (DHYAVLGLGH…VKRRAFNSVD (74 aa)) folds into the J domain. The ZRF1-UBD stretch occupies residues 160–250 (VDPTFDNSVP…RDERKWIEKQ (91 aa)). At S183 the chain carries Phosphoserine. 2 disordered regions span residues 287 to 312 (GKAK…KEKQ) and 426 to 453 (KEEA…GSKN). SANT domains lie at 449-511 (SGSK…KLDP) and 549-604 (IDSI…EMVK).

As to quaternary structure, component of ribosome-associated complex (RAC), a heterodimer composed of Hsp70/DnaK-type chaperone HSPA14 and Hsp40/DnaJ-type chaperone DNAJC2. Interacts (via ZRF1-UBD region) with ID1. In terms of processing, phosphorylated in M (mitotic) phase.

It localises to the nucleus. It is found in the cytoplasm. The protein resides in the cytosol. Acts both as a chaperone in the cytosol and as a chromatin regulator in the nucleus. When cytosolic, acts as a molecular chaperone: component of the ribosome-associated complex (RAC), a complex involved in folding or maintaining nascent polypeptides in a folding-competent state. In the RAC complex, stimulates the ATPase activity of the ribosome-associated pool of Hsp70-type chaperones HSPA14 that bind to the nascent polypeptide chain. When nuclear, mediates the switching from polycomb-repressed genes to an active state: specifically recruited at histone H2A ubiquitinated at 'Lys-119' (H2AK119ub), and promotes the displacement of the polycomb PRC1 complex from chromatin, thereby facilitating transcription activation. In Rattus norvegicus (Rat), this protein is DnaJ homolog subfamily C member 2 (Dnajc2).